Here is a 581-residue protein sequence, read N- to C-terminus: Chaperonin GroEL 1 (581 aa).

ATP contacts are provided by residues Thr29–Pro32, Asp86–Thr90, Gly413, and Asp492. The interval Pro522–Gly541 is disordered. The span at Gly528–Gly541 shows a compositional bias: gly residues.

Belongs to the chaperonin (HSP60) family. As to quaternary structure, forms a cylinder of 14 subunits composed of two heptameric rings stacked back-to-back. Interacts with the co-chaperonin GroES.

It localises to the cytoplasm. It catalyses the reaction ATP + H2O + a folded polypeptide = ADP + phosphate + an unfolded polypeptide.. In terms of biological role, together with its co-chaperonin GroES, plays an essential role in assisting protein folding. The GroEL-GroES system forms a nano-cage that allows encapsulation of the non-native substrate proteins and provides a physical environment optimized to promote and accelerate protein folding. The chain is Chaperonin GroEL 1 from Prochlorococcus marinus (strain MIT 9301).